Reading from the N-terminus, the 349-residue chain is PDZ and LIM domain protein 2 (349 aa).

Residues 1–84 (MALTVDVAGP…PLRLQLDRSQ (84 aa)) enclose the PDZ domain. The segment at 74–147 (SPLRLQLDRS…TPPPTSPVAL (74 aa)) is disordered. The span at 81-94 (DRSQTASPGQTNGE) shows a compositional bias: polar residues. Phosphoserine occurs at positions 124, 127, 129, 134, and 137. 2 positions are modified to phosphothreonine: T138 and T142. 2 positions are modified to phosphoserine: S143 and S163. The tract at residues 169–212 (AHHLTYPGHPTSQQAGHSSPSDSAVRVLLHSPGRPSSPRFSSLD) is disordered. Residues 178–190 (PTSQQAGHSSPSD) show a composition bias toward polar residues. Residues S199, S204, S205, S209, S210, and S263 each carry the phosphoserine modification. A compositionally biased stretch (low complexity) spans 199-210 (SPGRPSSPRFSS). Residues 281 to 341 (HTCEKCSVNI…EKHARQRYSM (61 aa)) form the LIM zinc-binding domain.

As to quaternary structure, interacts with alpha-actinins ACTN1 and ACTN4, FLNA and MYH9. Interacts (via LIM zinc-binding domain) with MKRN2. In terms of tissue distribution, highly expressed in lung. Expressed at intermediate level in kidney, testis and spleen. Weakly expressed in heart and brain.

The protein resides in the cytoplasm. It is found in the cytoskeleton. Functionally, probable adapter protein located at the actin cytoskeleton that promotes cell attachment. Necessary for the migratory capacity of epithelial cells. Overexpression enhances cell adhesion to collagen and fibronectin and suppresses anchorage independent growth. May contribute to tumor cell migratory capacity. The polypeptide is PDZ and LIM domain protein 2 (Pdlim2) (Mus musculus (Mouse)).